The following is a 694-amino-acid chain: Outer dynein arm-docking complex subunit 1 (694 aa).

Coiled coils occupy residues 27 to 192 and 222 to 259; these read ELSR…RYLN and REEAKTKMGMLQERAEKELAQSDTEAQILLRQISHLEQ. The disordered stretch occupies residues 271 to 290; that stretch reads RQPDPGVVQKEEQRAWETSE. Residues 339–418 adopt a coiled-coil conformation; it reads NFINEQNSEL…EKIKTDIQVL (80 aa). Disordered regions lie at residues 531 to 550 and 571 to 694; these read QDEEGSPKKRDSSPSLTLSS and SILS…RGYN. Phosphoserine is present on residues Ser-536, Ser-542, Ser-543, and Ser-545. The span at 628 to 642 shows a compositional bias: low complexity; sequence TSSSSYLGSTGYLET. Polar residues predominate over residues 655-672; the sequence is SQSMGSEMSRGFSSGSGQ. Residues 673–687 are compositionally biased toward low complexity; that stretch reads TSSAAPASRPSSATS.

This sequence belongs to the ODA1/DCC2 family. Component of the outer dynein arm-docking complex along with ODAD2, ODAD3, ODAD4 and CLXN. Interacts with ODAD3. Interacts with ODAD4; this interaction may facilitate the recruitment and/or attachment of outer dynein arm docking complex proteins,including ODAD1, ODAD3, and ODAD4 to ciliary axonemes. Interacts with DNAH9. Interacts with MNS1. Interacts with PIERCE1 and PIERCE2; the interactions link the outer dynein arms docking complex (ODA-DC) to the internal microtubule inner proteins (MIP) in cilium axoneme.

It is found in the cytoplasm. Its subcellular location is the cytoskeleton. The protein resides in the cilium axoneme. Component of the outer dynein arm-docking complex that mediates outer dynein arms (ODA) binding onto the doublet microtubule. Involved in mediating assembly of both ODAs and their axonemal docking complex onto ciliary microtubules. In Rattus norvegicus (Rat), this protein is Outer dynein arm-docking complex subunit 1 (Odad1).